The chain runs to 80 residues: Protein Vpu (80 aa).

Residues 1–7 (MLSLQIL) lie on the Extracellular side of the membrane. The chain crosses the membrane as a helical span at residues 8–28 (AIVALVVAAIIAIVVWSIVFI). The Cytoplasmic portion of the chain corresponds to 29-80 (EYRKILRQRKIDRLIDRIREREEDSGNESEGDQEELAALERGHLAPWDVDDL). The segment at 49–80 (REEDSGNESEGDQEELAALERGHLAPWDVDDL) is disordered. Phosphoserine; by host CK2 occurs at positions 53 and 57. A compositionally biased stretch (acidic residues) spans 53-65 (SGNESEGDQEELA).

Belongs to the HIV-1 VPU protein family. In terms of assembly, homopentamer. Interacts with host CD4 and BRTC; these interactions induce proteasomal degradation of CD4. Interacts with host BST2; this interaction leads to the degradation of host BST2. Interacts with host FBXW11. Interacts with host AP1M1; this interaction plays a role in the mistrafficking and subsequent degradation of host BST2. Interacts with host RANBP2; this interaction allows Vpu to down-regulate host BLM sumoylation. Phosphorylated by host CK2. This phosphorylation is necessary for interaction with human BTRC and degradation of CD4.

Its subcellular location is the host membrane. Its activity is regulated as follows. Ion channel activity is inhibited by hexamethylene amiloride in vitro. Functionally, enhances virion budding by targeting host CD4 and Tetherin/BST2 to proteasome degradation. Degradation of CD4 prevents any unwanted premature interactions between viral Env and its host receptor CD4 in the endoplasmic reticulum. Degradation of antiretroviral protein Tetherin/BST2 is important for virion budding, as BST2 tethers new viral particles to the host cell membrane. Mechanistically, Vpu bridges either CD4 or BST2 to BTRC, a substrate recognition subunit of the Skp1/Cullin/F-box protein E3 ubiquitin ligase, induces their ubiquitination and subsequent proteasomal degradation. The alteration of the E3 ligase specificity by Vpu seems to promote the degradation of host IKBKB, leading to NF-kappa-B down-regulation and subsequent apoptosis. Acts as a viroporin that forms an oligomeric ion channel in membranes. Modulates the host DNA repair mechanisms to promote degradation of nuclear viral cDNA in cells that are already productively infected in order to suppress immune sensing and proviral hyper-integration (superinfection). Manipulates PML-NBs and modulates SUMOylation of host BLM protein thereby enhancing its DNA-end processing activity toward viral unintegrated linear DNA. Also inhibits RAD52-mediated homologous repair of viral cDNA, preventing the generation of dead-end circular forms of single copies of the long terminal repeat and permitting sustained nucleolytic attack. This chain is Protein Vpu, found in Human immunodeficiency virus type 1 group M subtype B (strain 89.6) (HIV-1).